The following is a 527-amino-acid chain: Heat shock factor protein HSF8 (527 aa).

The DNA-binding element occupies 39-133 (PFLVKTYDMV…KSISRRKPAH (95 aa)). 3 disordered regions span residues 128-158 (RRKPAHGHAQQQQQPHGNAQQQMQPPGHSAS), 241-273 (NESNKRIAEGSKKRRIKQDIESQDPSVTPADGQ), and 297-341 (SSPR…TSGK). Positions 134–152 (GHAQQQQQPHGNAQQQMQP) are enriched in low complexity. Residues 317 to 326 (SPQSNASSGR) show a composition bias toward polar residues.

It belongs to the HSF family. In terms of assembly, homotrimer. In terms of processing, exhibits temperature-dependent phosphorylation.

Its subcellular location is the nucleus. In terms of biological role, DNA-binding protein that specifically binds heat shock promoter elements (HSE) and activates transcription. The protein is Heat shock factor protein HSF8 (HSF8) of Solanum lycopersicum (Tomato).